The sequence spans 605 residues: Probable potassium transport system protein Kup 2 (605 aa).

12 helical membrane passes run 17–37 (GLVF…IMTL), 45–65 (VLGI…VEYA), 96–116 (MAFA…DGVI), 139–159 (AQGG…IFQF), 169–189 (FGPI…VSII), 211–231 (GLAG…GEAL), 246–266 (AWYF…AFIL), 286–306 (LYIP…QALI), 338–358 (IYIG…MILF), 367–387 (AYGL…TMIF), 394–414 (WKVP…TANL), and 417–437 (LPHG…IMVI).

This sequence belongs to the HAK/KUP transporter (TC 2.A.72) family.

The protein localises to the cell inner membrane. The catalysed reaction is K(+)(in) + H(+)(in) = K(+)(out) + H(+)(out). Transport of potassium into the cell. Likely operates as a K(+):H(+) symporter. The protein is Probable potassium transport system protein Kup 2 of Geobacter sulfurreducens (strain ATCC 51573 / DSM 12127 / PCA).